The sequence spans 440 residues: Enolase 1-2 (440 aa).

The substrate site is built by H160 and E169. Catalysis depends on E212, which acts as the Proton donor. Residues D247, E296, and D321 each contribute to the Mg(2+) site. Substrate is bound by residues E296 and D321. The active-site Proton acceptor is K346. Substrate is bound by residues 373–376 and K397; that span reads SHRS.

It belongs to the enolase family. Homodimer. Mg(2+) is required as a cofactor.

It localises to the cytoplasm. The catalysed reaction is (2R)-2-phosphoglycerate = phosphoenolpyruvate + H2O. It participates in carbohydrate degradation; glycolysis; pyruvate from D-glyceraldehyde 3-phosphate: step 4/5. The sequence is that of Enolase 1-2 (eno102) from Schizosaccharomyces pombe (strain 972 / ATCC 24843) (Fission yeast).